A 435-amino-acid chain; its full sequence is MVDHSAALFNKAQNYMPGGVNSPVRAFGAVGGVPRFIKKASGPYLIDVDEKKYIDYVGSWGPMILGHAHPAVIQAAQEAVQNGLSFGAPCENEIKLAALIGEFMPSIEKVRMVNSGTEATMSALRLARGVTGRSKIIKFEGCYHGHADCLLVNAGSGALTFGMPSSPGVPLGTVQDTLTATFNDLDSVAALFEKYSKDIAAIIVEPIAGNMNLIPAAPDFLTGLRELCNQYGSLLIFDEVITGFRVAKGGAQSLYNIRPDLTALGKIIGGGMPVGAYGGRREIMNQLSPEGPVYQAGTLSGNPVAMAAGLATLKELTAENFYSNLKEKTERLVMGILSRAKAAKIPLTANFSCGIFGLIFTSEGRVTRYAQAVNGNVEHFRSFFHKMLDNGVYLAPSAFESGFISAAHTNKEVDKTLDIIENIFSVSETYLRISV.

An N6-(pyridoxal phosphate)lysine modification is found at K266.

It belongs to the class-III pyridoxal-phosphate-dependent aminotransferase family. HemL subfamily. Homodimer. The cofactor is pyridoxal 5'-phosphate.

It localises to the cytoplasm. The catalysed reaction is (S)-4-amino-5-oxopentanoate = 5-aminolevulinate. The protein operates within porphyrin-containing compound metabolism; protoporphyrin-IX biosynthesis; 5-aminolevulinate from L-glutamyl-tRNA(Glu): step 2/2. The polypeptide is Glutamate-1-semialdehyde 2,1-aminomutase (Coxiella burnetii (strain CbuG_Q212) (Coxiella burnetii (strain Q212))).